A 482-amino-acid chain; its full sequence is MKFIIKLFPEITIKSQSVRLRFIKILTGNIRNVLKHYDETLAVVRHWDNIEVRAKDENQRLAIRDALTRIPGIHHILEVEDVPFTDMHDIFEKALAQYREQLEGKTFCVRVKRRGKHEFSSIEVERYVGGGLNQHIESARVKLTNPDVTVHLEVEDDRLLLIKGRYEGIGGFPIGTQEDVLSLISGGFDSGVSSYMLMRRGCRVHYCFFNLGGAAHEIGVRQVAHYLWNRFGSSHRVRFVAINFEPVVGEILEKVDDGQMGVVLKRMMVRAASKVAERYGVQALVTGEALGQVSSQTLTNLRLIDNVSDTLILRPLISYDKGHIINLARQIGTEDFARTMPEYCGVISKSPTVKAIKAKIEAEEENFDFSILDKVVEEANNVDIREIAQQTQQEVVEVETVSGFGPNDVILDIRSVDEQDDKPLKVEGVDVVSLPFYKLSTKFGDLDQSKTWLLWCERGVMSRLQALYLREQGFANVKVYRP.

Positions 61 to 165 (LAIRDALTRI…DDRLLLIKGR (105 aa)) constitute a THUMP domain. ATP contacts are provided by residues 183–184 (LI), Lys-265, Gly-287, and Gln-296. An intrachain disulfide couples Cys-344 to Cys-456. Residues 404–482 (FGPNDVILDI…GFANVKVYRP (79 aa)) form the Rhodanese domain. The Cysteine persulfide intermediate role is filled by Cys-456.

It belongs to the ThiI family.

It localises to the cytoplasm. It catalyses the reaction [ThiI sulfur-carrier protein]-S-sulfanyl-L-cysteine + a uridine in tRNA + 2 reduced [2Fe-2S]-[ferredoxin] + ATP + H(+) = [ThiI sulfur-carrier protein]-L-cysteine + a 4-thiouridine in tRNA + 2 oxidized [2Fe-2S]-[ferredoxin] + AMP + diphosphate. The catalysed reaction is [ThiS sulfur-carrier protein]-C-terminal Gly-Gly-AMP + S-sulfanyl-L-cysteinyl-[cysteine desulfurase] + AH2 = [ThiS sulfur-carrier protein]-C-terminal-Gly-aminoethanethioate + L-cysteinyl-[cysteine desulfurase] + A + AMP + 2 H(+). The protein operates within cofactor biosynthesis; thiamine diphosphate biosynthesis. Catalyzes the ATP-dependent transfer of a sulfur to tRNA to produce 4-thiouridine in position 8 of tRNAs, which functions as a near-UV photosensor. Also catalyzes the transfer of sulfur to the sulfur carrier protein ThiS, forming ThiS-thiocarboxylate. This is a step in the synthesis of thiazole, in the thiamine biosynthesis pathway. The sulfur is donated as persulfide by IscS. The chain is tRNA sulfurtransferase from Salmonella choleraesuis (strain SC-B67).